The primary structure comprises 1188 residues: Spermatogenesis-associated protein 31C1 (1188 aa).

Residues 23 to 43 form a helical membrane-spanning segment; it reads PWVLDIFLTLVFALGLFFLLL. Disordered stretches follow at residues 57 to 92, 121 to 249, 483 to 510, 530 to 567, 733 to 813, 934 to 1013, 1121 to 1143, and 1155 to 1188; these read PSPR…KNHS, LEKG…LLTP, PGTS…EAQT, TPQN…DSGS, MPER…PTVP, NMGH…PSIS, QQAT…QQPL, and LRHP…HHHH. 2 stretches are compositionally biased toward basic residues: residues 59–68 and 80–92; these read PRKRKRHLVS and RRGR…KNHS. A compositionally biased stretch (basic and acidic residues) spans 138-154; the sequence is VGKRTPDGASRSSHEPM. Low complexity predominate over residues 191–207; sequence SSLSASQPPEPSLLLER. Residues 210 to 241 show a composition bias toward pro residues; it reads PEPPALFPHPPHTPDPLACSPPPPKGFTPPPL. Over residues 495-510 the composition is skewed to polar residues; the sequence is WQSSTSTGESSKEAQT. Composition is skewed to polar residues over residues 783 to 800 and 943 to 954; these read LKGS…SSRA and PNCQGSCKSQSP. Residues 960-976 are compositionally biased toward basic and acidic residues; it reads HKRENSRKPNLEKHEEM. The span at 1121–1130 shows a compositional bias: polar residues; that stretch reads QQATLKNQSR.

This sequence belongs to the SPATA31 family.

Its subcellular location is the membrane. Functionally, may play a role in spermatogenesis. In Homo sapiens (Human), this protein is Spermatogenesis-associated protein 31C1 (SPATA31C1).